Here is a 374-residue protein sequence, read N- to C-terminus: Ribosomal RNA large subunit methyltransferase G (374 aa).

Belongs to the methyltransferase superfamily. RlmG family.

It is found in the cytoplasm. The enzyme catalyses guanosine(1835) in 23S rRNA + S-adenosyl-L-methionine = N(2)-methylguanosine(1835) in 23S rRNA + S-adenosyl-L-homocysteine + H(+). In terms of biological role, specifically methylates the guanine in position 1835 (m2G1835) of 23S rRNA. The polypeptide is Ribosomal RNA large subunit methyltransferase G (Pseudomonas paraeruginosa (strain DSM 24068 / PA7) (Pseudomonas aeruginosa (strain PA7))).